The sequence spans 157 residues: UPF0262 protein RHECIAT_CH0000657 (157 aa).

This sequence belongs to the UPF0262 family.

The chain is UPF0262 protein RHECIAT_CH0000657 from Rhizobium etli (strain CIAT 652).